A 490-amino-acid polypeptide reads, in one-letter code: DNA-binding protein D-ETS-3 (490 aa).

Disordered regions lie at residues 190-255 (TASS…SGGG) and 271-294 (SSTQ…SQLR). A compositionally biased stretch (basic and acidic residues) spans 196–207 (HVEHKVRADKST). The segment covering 211–227 (ATTSSHAAAPSSSSSAS) has biased composition (low complexity). The segment covering 244–255 (GTGGGASASGGG) has biased composition (gly residues). Residues 271-280 (SSTQSQGYSS) show a composition bias toward low complexity. A DNA-binding region (ETS) is located at residues 317–397 (IQLWQFLLEL…HGKRYAYKFD (81 aa)).

This sequence belongs to the ETS family. Embryonic ventral nervous system, higher in the thoracic than abdominal segments.

The protein localises to the nucleus. The polypeptide is DNA-binding protein D-ETS-3 (Ets65A) (Drosophila melanogaster (Fruit fly)).